Here is a 143-residue protein sequence, read N- to C-terminus: MDSNSNQKPKIGVLLVGHGSRLPYGEEVINGIADIYRQEADHPVAVGFMNMSRPSIPEAINELAAMGVEKIIVTPVFLAHGVHTKHDIPHILGLDNGAEGHHHHEHEHEHEEFEFDGEIVYTEPLGADPRIAEIIRDRVKSAI.

Residue His-18 is the Proton acceptor of the active site. His-18 provides a ligand contact to Co(2+). Position 18 (His-18) interacts with Ni(2+). Substrate-binding positions include Arg-53 and 78 to 83 (LAHGVH). His-83 contributes to the Co(2+) binding site. His-83 lines the Ni(2+) pocket.

Belongs to the CbiX family. CbiXS subfamily. As to quaternary structure, homotetramer; dimer of dimers.

It carries out the reaction Co-sirohydrochlorin + 2 H(+) = sirohydrochlorin + Co(2+). It catalyses the reaction Ni-sirohydrochlorin + 2 H(+) = sirohydrochlorin + Ni(2+). Its pathway is cofactor biosynthesis; adenosylcobalamin biosynthesis; cob(II)yrinate a,c-diamide from sirohydrochlorin (anaerobic route): step 1/10. Its function is as follows. Catalyzes the insertion of Co(2+) into sirohydrochlorin as part of the anaerobic pathway to cobalamin biosynthesis. Involved in the biosynthesis of the unique nickel-containing tetrapyrrole coenzyme F430, the prosthetic group of methyl-coenzyme M reductase (MCR), which plays a key role in methanogenesis and anaerobic methane oxidation (Potential). Catalyzes the insertion of Ni(2+) into sirohydrochlorin to yield Ni-sirohydrochlorin (Potential). This chain is Sirohydrochlorin cobaltochelatase, found in Methanothermobacter thermautotrophicus (strain ATCC 29096 / DSM 1053 / JCM 10044 / NBRC 100330 / Delta H) (Methanobacterium thermoautotrophicum).